The sequence spans 384 residues: Putative exopolyphosphatase (384 aa).

Mn(2+)-binding residues include aspartate 40, aspartate 42, aspartate 116, histidine 138, and aspartate 200.

The protein belongs to the PPase class C family. Mn(2+) serves as cofactor.

It catalyses the reaction [phosphate](n) + H2O = [phosphate](n-1) + phosphate + H(+). In terms of biological role, degradation of inorganic polyphosphates. The polypeptide is Putative exopolyphosphatase (Schizosaccharomyces pombe (strain 972 / ATCC 24843) (Fission yeast)).